Consider the following 274-residue polypeptide: Large ribosomal subunit protein uL2 (274 aa).

The interval V223–K274 is disordered.

This sequence belongs to the universal ribosomal protein uL2 family. Part of the 50S ribosomal subunit. Forms a bridge to the 30S subunit in the 70S ribosome.

Its function is as follows. One of the primary rRNA binding proteins. Required for association of the 30S and 50S subunits to form the 70S ribosome, for tRNA binding and peptide bond formation. It has been suggested to have peptidyltransferase activity; this is somewhat controversial. Makes several contacts with the 16S rRNA in the 70S ribosome. The polypeptide is Large ribosomal subunit protein uL2 (Shewanella sp. (strain ANA-3)).